Here is a 160-residue protein sequence, read N- to C-terminus: Ureidoglycolate lyase (160 aa).

Belongs to the ureidoglycolate lyase family. Homodimer. Requires Ni(2+) as cofactor.

It carries out the reaction (S)-ureidoglycolate = urea + glyoxylate. It functions in the pathway nitrogen metabolism; (S)-allantoin degradation. Its function is as follows. Catalyzes the catabolism of the allantoin degradation intermediate (S)-ureidoglycolate, generating urea and glyoxylate. Involved in the anaerobic utilization of allantoin as sole nitrogen source. Reinforces the induction of genes involved in the degradation of allantoin and glyoxylate by producing glyoxylate. This Escherichia coli O6:H1 (strain CFT073 / ATCC 700928 / UPEC) protein is Ureidoglycolate lyase.